Reading from the N-terminus, the 477-residue chain is Glycogen synthase (477 aa).

ADP-alpha-D-glucose is bound at residue lysine 15.

Belongs to the glycosyltransferase 1 family. Bacterial/plant glycogen synthase subfamily.

It carries out the reaction [(1-&gt;4)-alpha-D-glucosyl](n) + ADP-alpha-D-glucose = [(1-&gt;4)-alpha-D-glucosyl](n+1) + ADP + H(+). It functions in the pathway glycan biosynthesis; glycogen biosynthesis. Its function is as follows. Synthesizes alpha-1,4-glucan chains using ADP-glucose. The protein is Glycogen synthase of Caldicellulosiruptor saccharolyticus (strain ATCC 43494 / DSM 8903 / Tp8T 6331).